We begin with the raw amino-acid sequence, 381 residues long: Pyrimidine monooxygenase RutA (381 aa).

Residues 66-67 (IK), N132, E141, 157-158 (RY), and S207 contribute to the FMN site.

The protein belongs to the NtaA/SnaA/DszA monooxygenase family. RutA subfamily.

The enzyme catalyses uracil + FMNH2 + NADH + O2 = (Z)-3-ureidoacrylate + FMN + NAD(+) + H2O + H(+). It catalyses the reaction thymine + FMNH2 + NADH + O2 = (Z)-2-methylureidoacrylate + FMN + NAD(+) + H2O + H(+). Functionally, catalyzes the pyrimidine ring opening between N-3 and C-4 by an unusual flavin hydroperoxide-catalyzed mechanism, adding oxygen atoms in the process to yield ureidoacrylate peracid, that immediately reacts with FMN forming ureidoacrylate and FMN-N(5)-oxide. The FMN-N(5)-oxide reacts spontaneously with NADH to produce FMN. Requires the flavin reductase RutF to regenerate FMN in vivo. This Methylobacterium radiotolerans (strain ATCC 27329 / DSM 1819 / JCM 2831 / NBRC 15690 / NCIMB 10815 / 0-1) protein is Pyrimidine monooxygenase RutA.